The sequence spans 158 residues: 6,7-dimethyl-8-ribityllumazine synthase (158 aa).

5-amino-6-(D-ribitylamino)uracil-binding positions include F24, 58 to 60, and 82 to 84; these read AFE and AVI. (2S)-2-hydroxy-3-oxobutyl phosphate is bound at residue 87–88; that stretch reads GT. H90 (proton donor) is an active-site residue. A 5-amino-6-(D-ribitylamino)uracil-binding site is contributed by F115. Residue R129 participates in (2S)-2-hydroxy-3-oxobutyl phosphate binding.

It belongs to the DMRL synthase family. Forms an icosahedral capsid composed of 60 subunits, arranged as a dodecamer of pentamers.

It catalyses the reaction (2S)-2-hydroxy-3-oxobutyl phosphate + 5-amino-6-(D-ribitylamino)uracil = 6,7-dimethyl-8-(1-D-ribityl)lumazine + phosphate + 2 H2O + H(+). It participates in cofactor biosynthesis; riboflavin biosynthesis; riboflavin from 2-hydroxy-3-oxobutyl phosphate and 5-amino-6-(D-ribitylamino)uracil: step 1/2. Its function is as follows. Catalyzes the formation of 6,7-dimethyl-8-ribityllumazine by condensation of 5-amino-6-(D-ribitylamino)uracil with 3,4-dihydroxy-2-butanone 4-phosphate. This is the penultimate step in the biosynthesis of riboflavin. In Ectopseudomonas mendocina (strain ymp) (Pseudomonas mendocina), this protein is 6,7-dimethyl-8-ribityllumazine synthase.